A 719-amino-acid polypeptide reads, in one-letter code: Polyribonucleotide nucleotidyltransferase (719 aa).

Mg(2+) is bound by residues Asp491 and Asp497. The KH domain maps to Pro558–Ile617. The region spanning Gly627–Lys695 is the S1 motif domain.

It belongs to the polyribonucleotide nucleotidyltransferase family. Requires Mg(2+) as cofactor.

The protein resides in the cytoplasm. It carries out the reaction RNA(n+1) + phosphate = RNA(n) + a ribonucleoside 5'-diphosphate. Its function is as follows. Involved in mRNA degradation. Catalyzes the phosphorolysis of single-stranded polyribonucleotides processively in the 3'- to 5'-direction. The protein is Polyribonucleotide nucleotidyltransferase of Bordetella petrii (strain ATCC BAA-461 / DSM 12804 / CCUG 43448).